A 628-amino-acid polypeptide reads, in one-letter code: Probable alpha-L-arabinofuranosidase A (628 aa).

Residues 1–25 (MVAFSTISGLGALSLLFSIIESVDG) form the signal peptide. N-linked (GlcNAc...) asparagine glycans are attached at residues Asn-36, Asn-51, Asn-74, Asn-152, Asn-164, Asn-260, Asn-359, Asn-404, and Asn-493.

It belongs to the glycosyl hydrolase 51 family.

It localises to the secreted. It catalyses the reaction Hydrolysis of terminal non-reducing alpha-L-arabinofuranoside residues in alpha-L-arabinosides.. The protein operates within glycan metabolism; L-arabinan degradation. Its function is as follows. Alpha-L-arabinofuranosidase involved in the degradation of arabinoxylan, a major component of plant hemicellulose. Acts only on small linear 1,5-alpha-linked L-arabinofuranosyl oligosaccharides. This Aspergillus terreus (strain NIH 2624 / FGSC A1156) protein is Probable alpha-L-arabinofuranosidase A (abfA).